Reading from the N-terminus, the 272-residue chain is Dickkopf-related protein 1 (272 aa).

Positions 1–31 (MMVVCAAAAVRFLAVFTMMALCSLPLLGASA) are cleaved as a signal peptide. Ser62 is a glycosylation site (O-linked (GalNAc...) serine). Intrachain disulfides connect Cys86/Cys98, Cys92/Cys114, Cys117/Cys131, Cys124/Cys136, Cys130/Cys141, Cys195/Cys207, Cys201/Cys216, Cys206/Cys243, Cys226/Cys251, and Cys245/Cys269. Positions 86–141 (CAEDEECGSDEYCSSPSRGAAGVGGVQICLACRKRRKRCMRHAMCCPGNYCKNGIC) are DKK-type Cys-1. Positions 195–269 (CLRSSDCAAG…ASNSSRLHTC (75 aa)) are DKK-type Cys-2. Asn262 carries N-linked (GlcNAc...) asparagine glycosylation.

Belongs to the dickkopf family. As to quaternary structure, interacts (via the C-terminal Cys-rich domain) with LRP5 (via beta-propeller regions 3 and 4); the interaction, enhanced by MESD and or KREMEN, antagonizes Wnt-mediated signaling. Interacts with LRP6. Forms a ternary complex with LRP6 and KREM1. Interacts with KREM1.

The protein localises to the secreted. Antagonizes canonical Wnt signaling by inhibiting LRP5/6 interaction with Wnt and by forming a ternary complex with the transmembrane protein KREMEN that promotes internalization of LRP5/6. Inhibits the pro-apoptotic function of KREMEN1 in a Wnt-independent manner, and has anti-apoptotic activity. Plays a role in limb development; attenuates Wnt signaling in the developing limb to allow normal limb patterning. The protein is Dickkopf-related protein 1 (Dkk1) of Mus musculus (Mouse).